The sequence spans 261 residues: UPF0246 protein Vapar_1301 (261 aa).

The protein belongs to the UPF0246 family.

This is UPF0246 protein Vapar_1301 from Variovorax paradoxus (strain S110).